The following is a 399-amino-acid chain: Probable dual-specificity RNA methyltransferase RlmN (399 aa).

Glu102 functions as the Proton acceptor in the catalytic mechanism. Residues 108-385 (YLDRATVCVS…CTVRVERGVA (278 aa)) enclose the Radical SAM core domain. A disulfide bond links Cys115 and Cys390. Residues Cys122, Cys126, and Cys129 each coordinate [4Fe-4S] cluster. S-adenosyl-L-methionine contacts are provided by residues 207 to 208 (GE), Ser239, 262 to 264 (SLH), and Asn347. The active-site S-methylcysteine intermediate is Cys390.

It belongs to the radical SAM superfamily. RlmN family. [4Fe-4S] cluster serves as cofactor.

It is found in the cytoplasm. The catalysed reaction is adenosine(2503) in 23S rRNA + 2 reduced [2Fe-2S]-[ferredoxin] + 2 S-adenosyl-L-methionine = 2-methyladenosine(2503) in 23S rRNA + 5'-deoxyadenosine + L-methionine + 2 oxidized [2Fe-2S]-[ferredoxin] + S-adenosyl-L-homocysteine. It catalyses the reaction adenosine(37) in tRNA + 2 reduced [2Fe-2S]-[ferredoxin] + 2 S-adenosyl-L-methionine = 2-methyladenosine(37) in tRNA + 5'-deoxyadenosine + L-methionine + 2 oxidized [2Fe-2S]-[ferredoxin] + S-adenosyl-L-homocysteine. Its function is as follows. Specifically methylates position 2 of adenine 2503 in 23S rRNA and position 2 of adenine 37 in tRNAs. The chain is Probable dual-specificity RNA methyltransferase RlmN from Roseiflexus castenholzii (strain DSM 13941 / HLO8).